Reading from the N-terminus, the 64-residue chain is Alpha-conotoxin CnIL (64 aa).

The N-terminal stretch at 1–21 (MGMRMMFTVFLLVVLTTTVVS) is a signal peptide. The propeptide occupies 22–49 (FPSDSASDGRDDEAKDERSDIYESKRDG). 2 cysteine pairs are disulfide-bonded: Cys-51–Cys-56 and Cys-52–Cys-62. A Cysteine amide modification is found at Cys-62.

Belongs to the conotoxin A superfamily. Expressed by the venom duct.

The protein resides in the secreted. The chain is Alpha-conotoxin CnIL from Conus consors (Singed cone).